Consider the following 710-residue polypeptide: Early transcription factor 82 kDa subunit (710 aa).

Belongs to the poxviridae VETF large subunit family. As to quaternary structure, heterodimer of a 70 kDa and a 82 kDa subunit. Part of the early transcription complex composed of ETF, RAP94/OPG109, and the DNA-directed RNA polymerase.

It localises to the virion. In terms of biological role, acts with RNA polymerase to initiate transcription from early gene promoters. Is recruited by the RPO-associated protein of 94 kDa RAP94/OPG109 to form the early transcription complex, which also contains the core RNA polymerase. ETF heterodimer binds to early gene promoters. The chain is Early transcription factor 82 kDa subunit (OPG133) from Bos taurus (Bovine).